We begin with the raw amino-acid sequence, 484 residues long: Ribosomal RNA small subunit methyltransferase F (484 aa).

Residues 119 to 125 (ASAPGSK), Glu-143, Asp-170, and Asp-188 each bind S-adenosyl-L-methionine. Cys-241 serves as the catalytic Nucleophile.

Belongs to the class I-like SAM-binding methyltransferase superfamily. RsmB/NOP family.

The protein localises to the cytoplasm. The enzyme catalyses cytidine(1407) in 16S rRNA + S-adenosyl-L-methionine = 5-methylcytidine(1407) in 16S rRNA + S-adenosyl-L-homocysteine + H(+). In terms of biological role, specifically methylates the cytosine at position 1407 (m5C1407) of 16S rRNA. The chain is Ribosomal RNA small subunit methyltransferase F from Shewanella frigidimarina (strain NCIMB 400).